The following is a 1925-amino-acid chain: Methylcytosine dioxygenase tet3-A (1925 aa).

A CXXC-type zinc finger spans residues 62–103; sequence SNKKRKRCGVCVPCLRKEPCGACYNCVNRSTSHQICKMRKCE. C69, C72, C75, C81, C84, C87, C97, and C102 together coordinate Zn(2+). Disordered stretches follow at residues 457–476, 630–685, 774–812, and 833–892; these read KNAL…QNKK, KSQK…NAVF, GAKD…QNDL, and DFSL…PISH. Residues 465-476 are compositionally biased toward polar residues; that stretch reads SPRQTSWEQNKK. A compositionally biased stretch (basic residues) spans 665–677; the sequence is KPPRKQVQIKKPR. The segment covering 777 to 797 has biased composition (low complexity); that stretch reads DSCPTPSTDDASSSSGQGDSA. Composition is skewed to polar residues over residues 841-856 and 883-892; these read APSQ…QISG and PALSNNPISH. Zn(2+)-binding residues include C982, C984, C1042, H1068, and C1070. R1110 is a binding site for 2-oxoglutarate. Zn(2+) is bound by residues C1120, C1122, C1138, C1147, and C1207. C1223 contacts 2-oxoglutarate. Residue H1229 coordinates Zn(2+). Residues H1231 and D1233 each contribute to the Fe cation site. Residue H1265 coordinates 2-oxoglutarate. 4 disordered regions span residues 1307-1364, 1474-1513, 1556-1600, and 1722-1769; these read SEPA…QTKP, LADG…KSFN, SVHS…LPND, and NWAS…EEEI. The span at 1316–1347 shows a compositional bias: basic and acidic residues; it reads RQLDAKKAAAEKKKLQKEKLVSPDKTKQEPAD. Polar residues predominate over residues 1350–1363; that stretch reads MCQQNPGVPQQQTK. Over residues 1490–1499 the composition is skewed to basic and acidic residues; it reads SYRRSSEVPH. 3 stretches are compositionally biased toward polar residues: residues 1502–1513, 1556–1572, and 1730–1742; these read SLQNPNSQKSFN, SVHS…QTSD, and VGNS…SQNH. H1804 is a binding site for Fe cation. 2-oxoglutarate is bound at residue 1819–1821; that stretch reads RIS. Positions 1837–1870 form a coiled coil; it reads LALWEAKMKLLAERARVKEEEAARLGIKQEVKSL.

Belongs to the TET family. Requires Fe(2+) as cofactor. Zn(2+) is required as a cofactor. As to expression, detected in embryo (at protein level). Detected in embryonic head, in developing brain, neural tube and eye.

It localises to the nucleus. The protein localises to the chromosome. It carries out the reaction a 5-methyl-2'-deoxycytidine in DNA + 2-oxoglutarate + O2 = a 5-hydroxymethyl-2'-deoxycytidine in DNA + succinate + CO2. The enzyme catalyses a 5-hydroxymethyl-2'-deoxycytidine in DNA + 2-oxoglutarate + O2 = a 5-formyl-2'-deoxycytidine in DNA + succinate + CO2 + H2O. It catalyses the reaction a 5-formyl-2'-deoxycytidine in DNA + 2-oxoglutarate + O2 = a 5-carboxyl-2'-deoxycytidine in DNA + succinate + CO2 + H(+). Its function is as follows. Dioxygenase that catalyzes the conversion of the modified genomic base 5-methylcytosine (5mC) into 5-hydroxymethylcytosine (5hmC) and plays a key role in epigenetic chromatin reprogramming during embryonic development. Conversion of 5mC into 5hmC probably constitutes the first step in cytosine demethylation. Selectively binds to the promoter region of target genes and contributes to regulate the expression of numerous developmental genes, including pax6, rax, sox9 and six3. May also contribute to the regulation of target genes in ways that do not require its enzyme activity. This Xenopus laevis (African clawed frog) protein is Methylcytosine dioxygenase tet3-A.